A 903-amino-acid chain; its full sequence is Protein translocase subunit SecA (903 aa).

Residues Gln-89, 107-111 (GEGKT), and Asp-502 contribute to the ATP site. The Zn(2+) site is built by Cys-887, Cys-889, Cys-898, and His-899.

The protein belongs to the SecA family. In terms of assembly, monomer and homodimer. Part of the essential Sec protein translocation apparatus which comprises SecA, SecYEG and auxiliary proteins SecDF-YajC and YidC. The cofactor is Zn(2+).

Its subcellular location is the cell inner membrane. It is found in the cytoplasm. It catalyses the reaction ATP + H2O + cellular proteinSide 1 = ADP + phosphate + cellular proteinSide 2.. Its function is as follows. Part of the Sec protein translocase complex. Interacts with the SecYEG preprotein conducting channel. Has a central role in coupling the hydrolysis of ATP to the transfer of proteins into and across the cell membrane, serving both as a receptor for the preprotein-SecB complex and as an ATP-driven molecular motor driving the stepwise translocation of polypeptide chains across the membrane. The chain is Protein translocase subunit SecA from Jannaschia sp. (strain CCS1).